The following is a 405-amino-acid chain: Glucose-1-phosphate adenylyltransferase (405 aa).

Alpha-D-glucose 1-phosphate contacts are provided by residues tyrosine 99, glycine 164, 179-180, and serine 197; that span reads EK.

It belongs to the bacterial/plant glucose-1-phosphate adenylyltransferase family. In terms of assembly, homotetramer.

It catalyses the reaction alpha-D-glucose 1-phosphate + ATP + H(+) = ADP-alpha-D-glucose + diphosphate. Its pathway is glycan biosynthesis; glycogen biosynthesis. Its function is as follows. Involved in the biosynthesis of ADP-glucose, a building block required for the elongation reactions to produce glycogen. Catalyzes the reaction between ATP and alpha-D-glucose 1-phosphate (G1P) to produce pyrophosphate and ADP-Glc. The chain is Glucose-1-phosphate adenylyltransferase from Corynebacterium aurimucosum (strain ATCC 700975 / DSM 44827 / CIP 107346 / CN-1) (Corynebacterium nigricans).